Here is a 594-residue protein sequence, read N- to C-terminus: Beta-fructofuranosidase, insoluble isoenzyme CWINV3 (594 aa).

The N-terminal stretch at 1-28 (MAKLNRSNIGLSLLLSMFLANFITDLEA) is a signal peptide. Substrate contacts are provided by residues 50–53 (WMND), Gln-69, Trp-77, and 113–114 (WS). Asp-53 is an active-site residue. Asn-147 carries an N-linked (GlcNAc...) asparagine glycan. 179–180 (RD) is a substrate binding site. N-linked (GlcNAc...) asparagine glycosylation is present at Asn-217. Glu-235 lines the substrate pocket. Asn-297 and Asn-329 each carry an N-linked (GlcNAc...) asparagine glycan. Cys-428 and Cys-480 are oxidised to a cystine.

It belongs to the glycosyl hydrolase 32 family. As to expression, expressed in seedlings, leaves, flowers, and seeds.

The protein resides in the secreted. Its subcellular location is the extracellular space. It is found in the apoplast. It localises to the cell wall. The enzyme catalyses Hydrolysis of terminal, non-reducing (2-&gt;1)- and (2-&gt;6)-linked beta-D-fructofuranose residues in fructans.. 6-fructan exohydrolase that can use phlein, levan, neokestose, levanbiose, 6-kestose, and 1-kestose as substrates. The sequence is that of Beta-fructofuranosidase, insoluble isoenzyme CWINV3 (CWINV3) from Arabidopsis thaliana (Mouse-ear cress).